Consider the following 361-residue polypeptide: Zygote arrest protein 1 (361 aa).

Disordered stretches follow at residues 1-23 (MFPA…AGDG), 98-128 (QPAG…PRSW), and 148-252 (VAGG…EQDK). A Phosphothreonine; by CDK1 modification is found at threonine 154. Serine 161 bears the Phosphoserine; by CDK1 mark. Basic and acidic residues predominate over residues 168 to 177 (REPEPREVAA). The segment at 263 to 346 (KYGYYHCKDC…RQDLCGRCKD (84 aa)) adopts a 3CxxC-type zinc-finger fold.

The protein belongs to the ZAR1 family. In terms of assembly, interacts with YBX2. Post-translationally, phosphorylation by CDK1 does not regulate formation of MARDO (mitochondria-associated ribonucleoprotein domain) membraneless compartment. Ubiquitinated and degradaded by the proteasome during oocyte meiotic maturation, leading to MARDO (mitochondria-associated ribonucleoprotein domain) membraneless compartment dissolution. As to expression, ovary. Expressed in primary oocytes (from primary through antral follicle stages) and during the progression from Meiosis I to Meiosis II. The mRNA is detected in growing oocytes (early primary follicle, type 3a) through fully grown oocytes (antral follicle, type 8).

The protein resides in the cytoplasm. It localises to the cytoplasmic ribonucleoprotein granule. MRNA-binding protein that mediates formation of MARDO (mitochondria-associated ribonucleoprotein domain), a membraneless compartment that stores maternal mRNAs in oocytes. MARDO assembly around mitochondria is directed by an increase in mitochondrial membrane potential during oocyte growth. Promotes formation of MARDO phase-separated membraneless compartment by undergoing liquid-liquid phase separation upon binding to maternal mRNAs. Binds to the 3'-UTR of maternal mRNAs. Maternal mRNAs stored in the MARDO are translationally repressed. Essential for female fertility and oocyte-to-embryo transition by coordinating maternal mRNA storage, translation and degradation. This chain is Zygote arrest protein 1, found in Mus musculus (Mouse).